The primary structure comprises 331 residues: Inositol 2-dehydrogenase (331 aa).

This sequence belongs to the Gfo/Idh/MocA family. As to quaternary structure, homotetramer.

It catalyses the reaction myo-inositol + NAD(+) = scyllo-inosose + NADH + H(+). Involved in the oxidation of myo-inositol (MI) to 2-keto-myo-inositol (2KMI or 2-inosose). This chain is Inositol 2-dehydrogenase, found in Renibacterium salmoninarum (strain ATCC 33209 / DSM 20767 / JCM 11484 / NBRC 15589 / NCIMB 2235).